The sequence spans 809 residues: Ubiquitin carboxyl-terminal hydrolase 1 (809 aa).

Positions 101-738 constitute a USP domain; that stretch reads AGLVNDGNTC…GVFMLFYEYD (638 aa). The active-site Nucleophile is the cysteine 110. The segment at 143–195 is disordered; the sequence is NEHNEEGNGQESAQDEATHKKNTRKGGKVYGKHKKKLNRKSSSKEDEEKSQEP. A compositionally biased stretch (basic residues) spans 162–183; that stretch reads KKNTRKGGKVYGKHKKKLNRKS. The segment covering 184 to 194 has biased composition (basic and acidic residues); it reads SSKEDEEKSQE. Phosphoserine occurs at positions 530, 531, and 555. Residues 569–596 form a disordered region; that stretch reads ASHYNHTKDISNYDPLNGEVDGVTSDDE. 2 positions are modified to phosphoserine: serine 618 and serine 638. Threonine 652 is subject to Phosphothreonine. 3 positions are modified to phosphoserine: serine 653, serine 654, and serine 670. Histidine 697 (proton acceptor) is an active-site residue. A disordered region spans residues 750 to 809; the sequence is LEAIQSNNEEDDEKEQEQKGVQEPKESQEQGEGEEQEEGQEQMKFERTEDHRDISGKDVN. Position 755 is a phosphoserine (serine 755). Basic and acidic residues predominate over residues 765 to 777; it reads QEQKGVQEPKESQ. Over residues 778–789 the composition is skewed to acidic residues; sequence EQGEGEEQEEGQ. Residues 790–809 show a composition bias toward basic and acidic residues; the sequence is EQMKFERTEDHRDISGKDVN.

This sequence belongs to the peptidase C19 family.

It carries out the reaction Thiol-dependent hydrolysis of ester, thioester, amide, peptide and isopeptide bonds formed by the C-terminal Gly of ubiquitin (a 76-residue protein attached to proteins as an intracellular targeting signal).. Functionally, has an ATP-independent isopeptidase activity, cleaving at the C-terminus of the ubiquitin moiety in natural or engineered linear fusion proteins, irrespective of their size or the presence of an N-terminal extension to ubiquitin. The sequence is that of Ubiquitin carboxyl-terminal hydrolase 1 (UBP1) from Saccharomyces cerevisiae (strain ATCC 204508 / S288c) (Baker's yeast).